The primary structure comprises 132 residues: NADPH-dependent 7-cyano-7-deazaguanine reductase (132 aa).

The active-site Thioimide intermediate is cysteine 43. Aspartate 50 acts as the Proton donor in catalysis. Residues 65–67 and 84–85 contribute to the substrate site; these read VEL and HE.

Belongs to the GTP cyclohydrolase I family. QueF type 1 subfamily.

It localises to the cytoplasm. It carries out the reaction 7-aminomethyl-7-carbaguanine + 2 NADP(+) = 7-cyano-7-deazaguanine + 2 NADPH + 3 H(+). The protein operates within tRNA modification; tRNA-queuosine biosynthesis. Catalyzes the NADPH-dependent reduction of 7-cyano-7-deazaguanine (preQ0) to 7-aminomethyl-7-deazaguanine (preQ1). This is NADPH-dependent 7-cyano-7-deazaguanine reductase from Thermosynechococcus vestitus (strain NIES-2133 / IAM M-273 / BP-1).